The following is a 185-amino-acid chain: UPF0397 protein LBA0922 (185 aa).

5 helical membrane-spanning segments follow: residues 11 to 31 (VVAIGIGSAIYVILARFTSIP), 45 to 65 (FLAFFASIYGATVGFSVGFIG), 72 to 92 (IMYGQTWWSWVLATGILGWII), 111 to 131 (IILFNIVQIIANILAWIVVAP), and 146 to 166 (FVQGISATISNGISILIIGTI).

Belongs to the UPF0397 family.

It is found in the cell membrane. This Lactobacillus acidophilus (strain ATCC 700396 / NCK56 / N2 / NCFM) protein is UPF0397 protein LBA0922.